A 471-amino-acid polypeptide reads, in one-letter code: Cysteine--tRNA ligase (471 aa).

Position 29 (Cys29) interacts with Zn(2+). Residues 31–41 (PTVYNYIHIGN) carry the 'HIGH' region motif. Zn(2+) is bound by residues Cys209, His234, and Glu238. The 'KMSKS' region signature appears at 266–270 (KMSKS). Lys269 serves as a coordination point for ATP.

It belongs to the class-I aminoacyl-tRNA synthetase family. As to quaternary structure, monomer. Zn(2+) serves as cofactor.

It localises to the cytoplasm. It catalyses the reaction tRNA(Cys) + L-cysteine + ATP = L-cysteinyl-tRNA(Cys) + AMP + diphosphate. The sequence is that of Cysteine--tRNA ligase from Listeria welshimeri serovar 6b (strain ATCC 35897 / DSM 20650 / CCUG 15529 / CIP 8149 / NCTC 11857 / SLCC 5334 / V8).